The primary structure comprises 373 residues: Putative glutamate--cysteine ligase 2-1 (373 aa).

It belongs to the glutamate--cysteine ligase type 2 family. YbdK subfamily.

It catalyses the reaction L-cysteine + L-glutamate + ATP = gamma-L-glutamyl-L-cysteine + ADP + phosphate + H(+). Its function is as follows. ATP-dependent carboxylate-amine ligase which exhibits weak glutamate--cysteine ligase activity. The protein is Putative glutamate--cysteine ligase 2-1 of Legionella pneumophila (strain Lens).